A 252-amino-acid chain; its full sequence is Small ribosomal subunit protein eS1A (252 aa).

The residue at position 2 (Ala2) is an N-acetylalanine; partial.

It belongs to the eukaryotic ribosomal protein eS1 family. Component of the small ribosomal subunit (SSU). Mature yeast ribosomes consist of a small (40S) and a large (60S) subunit. The 40S small subunit contains 1 molecule of ribosomal RNA (18S rRNA) and at least 33 different proteins. The large 60S subunit contains 3 rRNA molecules (25S, 5.8S and 5S rRNA) and at least 46 different proteins. eS1 interacts directly with uS11 and eS26, which form part of the mRNA exit tunnel.

Its subcellular location is the cytoplasm. Component of the ribosome, a large ribonucleoprotein complex responsible for the synthesis of proteins in the cell. The small ribosomal subunit (SSU) binds messenger RNAs (mRNAs) and translates the encoded message by selecting cognate aminoacyl-transfer RNA (tRNA) molecules. The large subunit (LSU) contains the ribosomal catalytic site termed the peptidyl transferase center (PTC), which catalyzes the formation of peptide bonds, thereby polymerizing the amino acids delivered by tRNAs into a polypeptide chain. The nascent polypeptides leave the ribosome through a tunnel in the LSU and interact with protein factors that function in enzymatic processing, targeting, and the membrane insertion of nascent chains at the exit of the ribosomal tunnel. This chain is Small ribosomal subunit protein eS1A (rps101), found in Schizosaccharomyces pombe (strain 972 / ATCC 24843) (Fission yeast).